The following is a 783-amino-acid chain: Metabotropic glutamate receptor-like protein J (783 aa).

The first 20 residues, 1 to 20, serve as a signal peptide directing secretion; it reads MKILLYIAIILSFFSLITIS. Residues 21–383 lie on the Extracellular side of the membrane; sequence SECKIAVLLS…DYPNSLKYGV (363 aa). The stretch at 56–85 forms a coiled coil; the sequence is DFSIYYENLEESMEEAEKAFQDALHKGANL. 5 N-linked (GlcNAc...) asparagine glycosylation sites follow: asparagine 181, asparagine 196, asparagine 256, asparagine 282, and asparagine 315. Residues 384–404 form a helical membrane-spanning segment; that stretch reads TIVSGVCIFICLVCMTLVVVF. At 405 to 415 the chain is on the cytoplasmic side; the sequence is KKARVIKSSSP. Residues 416–436 form a helical membrane-spanning segment; sequence AFLLLILLGCCIIFAACILFA. Topologically, residues 437–443 are extracellular; the sequence is QSPTNQT. N-linked (GlcNAc...) asparagine glycosylation is present at asparagine 441. A helical membrane pass occupies residues 444–464; that stretch reads CSARIWLLSLGYTLFLGNLLV. Residues 465–489 are Cytoplasmic-facing; it reads KNWRIWLLFDNPKLKKRAITNWKLY. Residues 490-510 traverse the membrane as a helical segment; the sequence is PWVFAILAIDVMILAIWQGLG. The Extracellular segment spans residues 511–538; it reads NINAESRIGYDSLTQYQYKNVCSSDDQG. The chain crosses the membrane as a helical span at residues 539–559; the sequence is SIALYLLLVFHGLVLLVACFI. Topologically, residues 560–575 are cytoplasmic; it reads SFKIKVVDIEEFNESK. A helical membrane pass occupies residues 576-596; that stretch reads PITTSVYIITFCLFIVIPLMV. Residues 597–604 lie on the Extracellular side of the membrane; that stretch reads SPQSLTSQ. The helical transmembrane segment at 605–625 threads the bilayer; sequence TTIICVCAIVTTLISMLLLFG. The Cytoplasmic portion of the chain corresponds to 626-783; the sequence is SKFYKMATQG…GETEIDSNNV (158 aa). A compositionally biased stretch (low complexity) spans 647-656; the sequence is KSSSKSSKSS. Disordered regions lie at residues 647-696 and 731-783; these read KSSS…FSNK and QLQQ…SNNV. Residues 670 to 679 show a composition bias toward acidic residues; it reads GEDDTSDETS. Over residues 763–783 the composition is skewed to polar residues; the sequence is VLSKRISNQQNGETEIDSNNV.

The protein in the N-terminal section; belongs to the BMP lipoprotein family. This sequence in the C-terminal section; belongs to the G-protein coupled receptor 3 family. GABA-B receptor subfamily.

The protein localises to the cell membrane. It localises to the membrane. It is found in the endoplasmic reticulum membrane. The protein resides in the golgi apparatus membrane. Its subcellular location is the nucleus envelope. Its function is as follows. May act during the development and be a negative regulator. This chain is Metabotropic glutamate receptor-like protein J (grlJ), found in Dictyostelium discoideum (Social amoeba).